A 474-amino-acid polypeptide reads, in one-letter code: BPI fold-containing family B member 1 (474 aa).

Residues M1–A21 form the signal peptide. 4 N-linked (GlcNAc...) asparagine glycosylation sites follow: N153, N160, N263, and N400. Cysteines 157 and 200 form a disulfide.

It belongs to the BPI/LBP/Plunc superfamily. Plunc family. As to expression, expressed in tongue, lung, thymus, and stomach. Expressed in epithelia of palate, anterior pharynx, trachea and upper bronchi. Expressed in distal tip of papillae in the anterior third of the tongue and in serous cells of von Ebner glands in the posterior third of the tongue. Expressed in columnar epithelium of the duodenum in embryonic gut at 16.5 dpc.

It localises to the secreted. Its function is as follows. May play a role in innate immunity in mouth, nose and lungs. Binds bacterial lipopolysaccharide (LPS) and modulates the cellular responses to LPS. May be involved in formation of the left-right axis in the node of the developing embryo. This Mus musculus (Mouse) protein is BPI fold-containing family B member 1 (Bpifb1).